A 249-amino-acid polypeptide reads, in one-letter code: 23S rRNA (guanosine-2'-O-)-methyltransferase RlmB (249 aa).

The S-adenosyl-L-methionine site is built by Gly-200, Ile-220, and Leu-229.

The protein belongs to the class IV-like SAM-binding methyltransferase superfamily. RNA methyltransferase TrmH family. RlmB subfamily.

The protein localises to the cytoplasm. It carries out the reaction guanosine(2251) in 23S rRNA + S-adenosyl-L-methionine = 2'-O-methylguanosine(2251) in 23S rRNA + S-adenosyl-L-homocysteine + H(+). In terms of biological role, specifically methylates the ribose of guanosine 2251 in 23S rRNA. The chain is 23S rRNA (guanosine-2'-O-)-methyltransferase RlmB from Xylella fastidiosa (strain 9a5c).